The following is a 209-amino-acid chain: Imidazoleglycerol-phosphate dehydratase (209 aa).

It belongs to the imidazoleglycerol-phosphate dehydratase family.

It localises to the cytoplasm. The catalysed reaction is D-erythro-1-(imidazol-4-yl)glycerol 3-phosphate = 3-(imidazol-4-yl)-2-oxopropyl phosphate + H2O. Its pathway is amino-acid biosynthesis; L-histidine biosynthesis; L-histidine from 5-phospho-alpha-D-ribose 1-diphosphate: step 6/9. The protein is Imidazoleglycerol-phosphate dehydratase of Nostoc sp. (strain PCC 7120 / SAG 25.82 / UTEX 2576).